Consider the following 642-residue polypeptide: Chaperone protein HtpG (642 aa).

The interval 1-350 is a; substrate-binding; sequence MATDTQKETL…SNDLSLNVSR (350 aa). The interval 351-567 is b; it reads EILQNDHAVD…EYDMGLQMRR (217 aa). Residues 568-642 are c; that stretch reads LLEQAGQKLP…MNKLIVQLSK (75 aa).

This sequence belongs to the heat shock protein 90 family. Homodimer.

The protein resides in the cytoplasm. Functionally, molecular chaperone. Has ATPase activity. The chain is Chaperone protein HtpG from Marinomonas sp. (strain MWYL1).